The sequence spans 475 residues: Ribulose bisphosphate carboxylase large chain (475 aa).

A propeptide spanning residues 1–2 is cleaved from the precursor; that stretch reads MS. The residue at position 3 (P3) is an N-acetylproline. K14 is subject to N6,N6,N6-trimethyllysine. 2 residues coordinate substrate: N123 and T173. K175 (proton acceptor) is an active-site residue. A substrate-binding site is contributed by K177. Mg(2+)-binding residues include K201, D203, and E204. K201 is subject to N6-carboxylysine. H294 acts as the Proton acceptor in catalysis. Substrate contacts are provided by R295, H327, and S379.

It belongs to the RuBisCO large chain family. Type I subfamily. As to quaternary structure, heterohexadecamer of 8 large chains and 8 small chains; disulfide-linked. The disulfide link is formed within the large subunit homodimers. It depends on Mg(2+) as a cofactor. In terms of processing, the disulfide bond which can form in the large chain dimeric partners within the hexadecamer appears to be associated with oxidative stress and protein turnover.

It localises to the plastid. The protein localises to the chloroplast. It carries out the reaction 2 (2R)-3-phosphoglycerate + 2 H(+) = D-ribulose 1,5-bisphosphate + CO2 + H2O. The catalysed reaction is D-ribulose 1,5-bisphosphate + O2 = 2-phosphoglycolate + (2R)-3-phosphoglycerate + 2 H(+). Its function is as follows. RuBisCO catalyzes two reactions: the carboxylation of D-ribulose 1,5-bisphosphate, the primary event in carbon dioxide fixation, as well as the oxidative fragmentation of the pentose substrate in the photorespiration process. Both reactions occur simultaneously and in competition at the same active site. This is Ribulose bisphosphate carboxylase large chain from Picea sitchensis (Sitka spruce).